A 93-amino-acid polypeptide reads, in one-letter code: uncharacterized protein (93 aa).

The tract at residues 26-73 (NRGTIFRPMTRNSGIVGRRGGPVAPAPFRNNVQKPGTRPPGFKPPSGV) is disordered.

This is an uncharacterized protein from Caenorhabditis elegans.